Reading from the N-terminus, the 267-residue chain is Hydroxyethylthiazole kinase 2 (267 aa).

Met-41 serves as a coordination point for substrate. The ATP site is built by Lys-116 and Thr-166. Gly-193 is a binding site for substrate.

The protein belongs to the Thz kinase family. Mg(2+) is required as a cofactor.

The enzyme catalyses 5-(2-hydroxyethyl)-4-methylthiazole + ATP = 4-methyl-5-(2-phosphooxyethyl)-thiazole + ADP + H(+). Its pathway is cofactor biosynthesis; thiamine diphosphate biosynthesis; 4-methyl-5-(2-phosphoethyl)-thiazole from 5-(2-hydroxyethyl)-4-methylthiazole: step 1/1. Catalyzes the phosphorylation of the hydroxyl group of 4-methyl-5-beta-hydroxyethylthiazole (THZ). The polypeptide is Hydroxyethylthiazole kinase 2 (Streptococcus pneumoniae (strain Hungary19A-6)).